The sequence spans 441 residues: N-acetylmuramyl-L-alanine amidase (441 aa).

Residues 1–25 form the signal peptide; sequence MKTKTLFIFSAILTLSIFAPNETFA.

This sequence belongs to the peptidase S12 family.

It catalyses the reaction Hydrolyzes the link between N-acetylmuramoyl residues and L-amino acid residues in certain cell-wall glycopeptides.. It functions in the pathway cell wall biogenesis; peptidoglycan recycling. In terms of biological role, involved in muropeptide recycling. Hydrolyzes the amide bond between N-acetylmuramic acid (MurNAc) and the L-alanine residue of the stem peptide. Cannot hydrolyze muropeptides containing N-acetylglucosamine (GlcNAc) at the non-reducing end. This is N-acetylmuramyl-L-alanine amidase from Bacillus subtilis (strain 168).